The primary structure comprises 398 residues: FK506-binding protein 4 (398 aa).

Disordered stretches follow at residues 66–120 (EVDE…DEYE), 164–232 (VKHP…QLAK), and 245–288 (DLIA…KKNK). Acidic residues predominate over residues 170–228 (EPLEDLYSDEDSEEYSDDELDQEIEEDDELDHDEASSEESDEDQEFYDAISEGDEDIDE). Residues 264–287 (PETKKSKKTKDEKNTKATENEKKN) show a composition bias toward basic and acidic residues. Residues 312 to 398 (GSKVGMRYIG…TFDVKLVSLK (87 aa)) enclose the PPIase FKBP-type domain.

The protein belongs to the FKBP-type PPIase family. FKBP3/4 subfamily. As to quaternary structure, binds to histones H3 and H4.

The protein resides in the nucleus. It carries out the reaction [protein]-peptidylproline (omega=180) = [protein]-peptidylproline (omega=0). Its activity is regulated as follows. Inhibited by both FK506 and rapamycin. PPIase that acts as a histone chaperone. Histone proline isomerase that increases the rate of cis-trans isomerization at prolines on the histone H3 N-terminal tail. Proline isomerization influences H3 methylation thereby regulating gene expression. The polypeptide is FK506-binding protein 4 (FPR4) (Candida glabrata (strain ATCC 2001 / BCRC 20586 / JCM 3761 / NBRC 0622 / NRRL Y-65 / CBS 138) (Yeast)).